Reading from the N-terminus, the 249-residue chain is Coproheme decarboxylase (249 aa).

Fe-coproporphyrin III is bound by residues Arg-131, 145–149, His-172, Gln-185, and Ser-223; that span reads YPMNK. Tyr-145 is an active-site residue.

This sequence belongs to the ChdC family. Type 1 subfamily. It depends on Fe-coproporphyrin III as a cofactor.

The catalysed reaction is Fe-coproporphyrin III + 2 H2O2 + 2 H(+) = heme b + 2 CO2 + 4 H2O. The enzyme catalyses Fe-coproporphyrin III + H2O2 + H(+) = harderoheme III + CO2 + 2 H2O. It catalyses the reaction harderoheme III + H2O2 + H(+) = heme b + CO2 + 2 H2O. Its pathway is porphyrin-containing compound metabolism; protoheme biosynthesis. Involved in coproporphyrin-dependent heme b biosynthesis. Catalyzes the decarboxylation of Fe-coproporphyrin III (coproheme) to heme b (protoheme IX), the last step of the pathway. The reaction occurs in a stepwise manner with a three-propionate intermediate. The chain is Coproheme decarboxylase from Thermus thermophilus (strain ATCC BAA-163 / DSM 7039 / HB27).